A 282-amino-acid chain; its full sequence is HTH-type transcriptional activator RhaR (282 aa).

The HTH araC/xylS-type domain maps to 179 to 277; it reads DKLITALANS…GMTPSQWRHL (99 aa). 2 DNA-binding regions (H-T-H motif) span residues 196–217 and 244–267; these read DAFC…RAQT and VSEI…TRET.

In terms of assembly, binds DNA as a dimer.

The protein localises to the cytoplasm. Its function is as follows. Activates expression of the rhaSR operon in response to L-rhamnose. The polypeptide is HTH-type transcriptional activator RhaR (Salmonella choleraesuis (strain SC-B67)).